Here is a 202-residue protein sequence, read N- to C-terminus: ATP-dependent Clp protease proteolytic subunit (202 aa).

The active-site Nucleophile is serine 106. The active site involves histidine 131.

This sequence belongs to the peptidase S14 family. In terms of assembly, fourteen ClpP subunits assemble into 2 heptameric rings which stack back to back to give a disk-like structure with a central cavity, resembling the structure of eukaryotic proteasomes.

The protein localises to the cytoplasm. The enzyme catalyses Hydrolysis of proteins to small peptides in the presence of ATP and magnesium. alpha-casein is the usual test substrate. In the absence of ATP, only oligopeptides shorter than five residues are hydrolyzed (such as succinyl-Leu-Tyr-|-NHMec, and Leu-Tyr-Leu-|-Tyr-Trp, in which cleavage of the -Tyr-|-Leu- and -Tyr-|-Trp bonds also occurs).. Its function is as follows. Cleaves peptides in various proteins in a process that requires ATP hydrolysis. Has a chymotrypsin-like activity. Plays a major role in the degradation of misfolded proteins. The protein is ATP-dependent Clp protease proteolytic subunit of Variovorax paradoxus (strain S110).